The chain runs to 367 residues: Histidinol-phosphate aminotransferase (367 aa).

K226 carries the post-translational modification N6-(pyridoxal phosphate)lysine.

It belongs to the class-II pyridoxal-phosphate-dependent aminotransferase family. Histidinol-phosphate aminotransferase subfamily. In terms of assembly, homodimer. Pyridoxal 5'-phosphate is required as a cofactor.

It carries out the reaction L-histidinol phosphate + 2-oxoglutarate = 3-(imidazol-4-yl)-2-oxopropyl phosphate + L-glutamate. The protein operates within amino-acid biosynthesis; L-histidine biosynthesis; L-histidine from 5-phospho-alpha-D-ribose 1-diphosphate: step 7/9. This is Histidinol-phosphate aminotransferase from Aliarcobacter butzleri (strain RM4018) (Arcobacter butzleri).